A 341-amino-acid polypeptide reads, in one-letter code: MKIRVGILGATGYTGLELLRMLKNHPQVKITYLSSNNFSGQSMKDIYPFAEIDILLSKIDVKEIKANCDVVFTALPAGISYDIVKSLRDENLKIIDLGADLRFDDPSLYEKWYGRTLQDYGLIKRVYGLPELYRSEIKESRFIGNPGCYPTSILLATAPILKRKLLVNGEIIVDSKSGVSGAGKKEELAYSFCEIDGSLKPYSVINHKHVPEIQEQMKKIYHSEVTVIFAPHLVPMVRGILSTIYLKTRLSADELYGLYSEFYRDEYFVHVLKPAIYPSTKWSYGSNHVFISMKKDERTDTAVLISVLDNLVKGASGQAIQNMNILFSLREDTGLTFTVYP.

Cys-148 is a catalytic residue.

Belongs to the NAGSA dehydrogenase family. Type 1 subfamily.

It localises to the cytoplasm. The catalysed reaction is N-acetyl-L-glutamate 5-semialdehyde + phosphate + NADP(+) = N-acetyl-L-glutamyl 5-phosphate + NADPH + H(+). It participates in amino-acid biosynthesis; L-arginine biosynthesis; N(2)-acetyl-L-ornithine from L-glutamate: step 3/4. Catalyzes the NADPH-dependent reduction of N-acetyl-5-glutamyl phosphate to yield N-acetyl-L-glutamate 5-semialdehyde. This chain is N-acetyl-gamma-glutamyl-phosphate reductase, found in Pseudothermotoga lettingae (strain ATCC BAA-301 / DSM 14385 / NBRC 107922 / TMO) (Thermotoga lettingae).